We begin with the raw amino-acid sequence, 155 residues long: Endoribonuclease YbeY (155 aa).

The interval 64-84 (SFPMDEMRAPGDDEDPPSGLL) is disordered. Residues histidine 115, histidine 119, and histidine 125 each contribute to the Zn(2+) site.

Belongs to the endoribonuclease YbeY family. Zn(2+) serves as cofactor.

Its subcellular location is the cytoplasm. In terms of biological role, single strand-specific metallo-endoribonuclease involved in late-stage 70S ribosome quality control and in maturation of the 3' terminus of the 16S rRNA. The sequence is that of Endoribonuclease YbeY from Cutibacterium acnes (strain DSM 16379 / KPA171202) (Propionibacterium acnes).